A 234-amino-acid polypeptide reads, in one-letter code: Leucyl/phenylalanyl-tRNA--protein transferase (234 aa).

This sequence belongs to the L/F-transferase family.

It is found in the cytoplasm. It catalyses the reaction N-terminal L-lysyl-[protein] + L-leucyl-tRNA(Leu) = N-terminal L-leucyl-L-lysyl-[protein] + tRNA(Leu) + H(+). The catalysed reaction is N-terminal L-arginyl-[protein] + L-leucyl-tRNA(Leu) = N-terminal L-leucyl-L-arginyl-[protein] + tRNA(Leu) + H(+). It carries out the reaction L-phenylalanyl-tRNA(Phe) + an N-terminal L-alpha-aminoacyl-[protein] = an N-terminal L-phenylalanyl-L-alpha-aminoacyl-[protein] + tRNA(Phe). Functions in the N-end rule pathway of protein degradation where it conjugates Leu, Phe and, less efficiently, Met from aminoacyl-tRNAs to the N-termini of proteins containing an N-terminal arginine or lysine. The polypeptide is Leucyl/phenylalanyl-tRNA--protein transferase (Shigella dysenteriae serotype 1 (strain Sd197)).